Consider the following 560-residue polypeptide: Nucleoprotein (560 aa).

The binding site for the cap structure m7GTP stretch occupies residues 54-236 (LRKSKRGDTD…ITKDESALNI (183 aa)). 2 residues coordinate Mn(2+): Asp380 and Glu382. 4 residues coordinate Zn(2+): Glu390, Cys497, His500, and Cys521. Asp525 serves as a coordination point for Mn(2+).

The protein belongs to the arenaviridae nucleocapsid protein family. Homomultimerizes to form the nucleocapsid. Binds to viral genomic RNA. Interacts with glycoprotein G2. Interacts with protein Z; this interaction probably directs the encapsidated genome to budding sites. Interacts with protein L; this interaction does not interfere with Z-L interaction. Interacts with host IKBKE (via Protein kinase domain); the interaction inhibits IKBKE kinase activity.

It localises to the virion. The protein resides in the host cytoplasm. Encapsidates the genome, protecting it from nucleases. The encapsidated genomic RNA is termed the nucleocapsid (NC). Serves as template for viral transcription and replication. The increased presence of protein N in host cell does not seem to trigger the switch from transcription to replication as observed in other negative strain RNA viruses. Through the interaction with host IKBKE, strongly inhibits the phosphorylation and nuclear translocation of host IRF3, a protein involved in interferon activation pathway, leading to the inhibition of interferon-beta and IRF3-dependent promoters activation. Also encodes a functional 3'-5' exoribonuclease that degrades preferentially dsRNA substrates and thereby participates in the suppression of interferon induction. In Homo sapiens (Human), this protein is Nucleoprotein.